Consider the following 157-residue polypeptide: ABA-responsive protein ABR17 (157 aa).

It belongs to the BetVI family.

This Pisum sativum (Garden pea) protein is ABA-responsive protein ABR17.